The sequence spans 586 residues: uncharacterized protein (586 aa).

The ABC transmembrane type-1 domain occupies 29–312 (YGIAIGSMVV…LARMRISLES (284 aa)). A run of 4 helical transmembrane segments spans residues 30–50 (GIAI…AWIM), 66–86 (VFGV…ATYV), 162–184 (MVIQ…ILGV), and 256–276 (IMET…GVLV). One can recognise an ABC transporter domain in the interval 346-580 (IRFKDVNFSY…DGVYRRLYEL (235 aa)). 379–386 (GPSGAGKS) provides a ligand contact to ATP.

Belongs to the ABC transporter superfamily.

It localises to the cell membrane. This is an uncharacterized protein from Sinorhizobium fredii (strain NBRC 101917 / NGR234).